A 435-amino-acid chain; its full sequence is D-inositol 3-phosphate glycosyltransferase (435 aa).

Histidine 25 lines the 1D-myo-inositol 3-phosphate pocket. UDP-N-acetyl-alpha-D-glucosamine-binding positions include 31–32 (QP) and glycine 39. 1D-myo-inositol 3-phosphate contacts are provided by residues 36 to 41 (DAGGMN), lysine 94, tyrosine 127, threonine 151, and arginine 171. UDP-N-acetyl-alpha-D-glucosamine-binding residues include arginine 245 and lysine 250. Tyrosine 320, arginine 321, and alanine 323 together coordinate Mg(2+). 2 residues coordinate UDP-N-acetyl-alpha-D-glucosamine: glutamate 333 and glutamate 341. Threonine 347 is a Mg(2+) binding site.

The protein belongs to the glycosyltransferase group 1 family. MshA subfamily. As to quaternary structure, homodimer.

It carries out the reaction 1D-myo-inositol 3-phosphate + UDP-N-acetyl-alpha-D-glucosamine = 1D-myo-inositol 2-acetamido-2-deoxy-alpha-D-glucopyranoside 3-phosphate + UDP + H(+). Catalyzes the transfer of a N-acetyl-glucosamine moiety to 1D-myo-inositol 3-phosphate to produce 1D-myo-inositol 2-acetamido-2-deoxy-glucopyranoside 3-phosphate in the mycothiol biosynthesis pathway. The chain is D-inositol 3-phosphate glycosyltransferase from Streptosporangium roseum (strain ATCC 12428 / DSM 43021 / JCM 3005 / KCTC 9067 / NCIMB 10171 / NRRL 2505 / NI 9100).